The primary structure comprises 1446 residues: DNA-directed RNA polymerase subunit beta'' (1446 aa).

Zn(2+) is bound by residues Cys-217, Cys-285, Cys-292, and Cys-295.

This sequence belongs to the RNA polymerase beta' chain family. RpoC2 subfamily. In terms of assembly, in plastids the minimal PEP RNA polymerase catalytic core is composed of four subunits: alpha, beta, beta', and beta''. When a (nuclear-encoded) sigma factor is associated with the core the holoenzyme is formed, which can initiate transcription. Requires Zn(2+) as cofactor.

The protein localises to the plastid. The protein resides in the chloroplast. The enzyme catalyses RNA(n) + a ribonucleoside 5'-triphosphate = RNA(n+1) + diphosphate. Functionally, DNA-dependent RNA polymerase catalyzes the transcription of DNA into RNA using the four ribonucleoside triphosphates as substrates. The polypeptide is DNA-directed RNA polymerase subunit beta'' (Thalassiosira pseudonana (Marine diatom)).